Consider the following 504-residue polypeptide: D-alanine--D-alanyl carrier protein ligase (504 aa).

Position 152–153 (152–153 (TS)) interacts with ATP. Residue aspartate 197 participates in D-alanine binding. 292 to 297 (NTYGPT) contributes to the ATP binding site. Position 301 (valine 301) interacts with D-alanine. ATP is bound by residues aspartate 383, 394–397 (YNGR), and lysine 492. Lysine 492 contributes to the D-alanine binding site.

It belongs to the ATP-dependent AMP-binding enzyme family. DltA subfamily.

It localises to the cytoplasm. The enzyme catalyses holo-[D-alanyl-carrier protein] + D-alanine + ATP = D-alanyl-[D-alanyl-carrier protein] + AMP + diphosphate. It participates in cell wall biogenesis; lipoteichoic acid biosynthesis. Its function is as follows. Catalyzes the first step in the D-alanylation of lipoteichoic acid (LTA), the activation of D-alanine and its transfer onto the D-alanyl carrier protein (Dcp) DltC. In an ATP-dependent two-step reaction, forms a high energy D-alanyl-AMP intermediate, followed by transfer of the D-alanyl residue as a thiol ester to the phosphopantheinyl prosthetic group of the Dcp. D-alanylation of LTA plays an important role in modulating the properties of the cell wall in Gram-positive bacteria, influencing the net charge of the cell wall. The protein is D-alanine--D-alanyl carrier protein ligase of Bacillus cytotoxicus (strain DSM 22905 / CIP 110041 / 391-98 / NVH 391-98).